We begin with the raw amino-acid sequence, 153 residues long: Transcriptional repressor NrdR (153 aa).

A zinc finger lies at 3–34 (CPFCGYEDSKVVDTRPTNEGKTIKRRRECLKC). One can recognise an ATP-cone domain in the interval 49–139 (ILVIKKDNRR…VYRQFKDINT (91 aa)).

This sequence belongs to the NrdR family. Zn(2+) is required as a cofactor.

Functionally, negatively regulates transcription of bacterial ribonucleotide reductase nrd genes and operons by binding to NrdR-boxes. This is Transcriptional repressor NrdR from Caldicellulosiruptor bescii (strain ATCC BAA-1888 / DSM 6725 / KCTC 15123 / Z-1320) (Anaerocellum thermophilum).